A 132-amino-acid polypeptide reads, in one-letter code: UPF0357 protein YCL012C (132 aa).

The signal sequence occupies residues 1–25; it reads MWDLFYFKVFFWVVLISLCIFMVHR.

The protein belongs to the UPF0357 family.

This chain is UPF0357 protein YCL012C (YCL012C), found in Saccharomyces bayanus (Yeast).